The primary structure comprises 484 residues: ATP synthase subunit beta (484 aa).

Residue 169-176 (GGAGVGKT) coordinates ATP.

This sequence belongs to the ATPase alpha/beta chains family. As to quaternary structure, F-type ATPases have 2 components, CF(1) - the catalytic core - and CF(0) - the membrane proton channel. CF(1) has five subunits: alpha(3), beta(3), gamma(1), delta(1), epsilon(1). CF(0) has three main subunits: a(1), b(2) and c(9-12). The alpha and beta chains form an alternating ring which encloses part of the gamma chain. CF(1) is attached to CF(0) by a central stalk formed by the gamma and epsilon chains, while a peripheral stalk is formed by the delta and b chains.

The protein localises to the cell membrane. The catalysed reaction is ATP + H2O + 4 H(+)(in) = ADP + phosphate + 5 H(+)(out). In terms of biological role, produces ATP from ADP in the presence of a proton gradient across the membrane. The catalytic sites are hosted primarily by the beta subunits. The chain is ATP synthase subunit beta from Cutibacterium acnes (strain DSM 16379 / KPA171202) (Propionibacterium acnes).